The chain runs to 92 residues: Large ribosomal subunit protein bL34m (92 aa).

The transit peptide at 1 to 46 (MALLAGSLLGPTSRSAALLGGRWLQPRAWLGFPDAWGLPTPQQARG) directs the protein to the mitochondrion. The segment covering 40-57 (TPQQARGKSRGNEYQPSN) has biased composition (polar residues). A disordered region spans residues 40-63 (TPQQARGKSRGNEYQPSNIKRKNK). Position 71 is a phosphoserine (Ser71).

The protein belongs to the bacterial ribosomal protein bL34 family. As to quaternary structure, component of the mitochondrial ribosome large subunit (39S) which comprises a 16S rRNA and about 50 distinct proteins.

The protein resides in the mitochondrion. This is Large ribosomal subunit protein bL34m (MRPL34) from Macaca fascicularis (Crab-eating macaque).